The following is a 388-amino-acid chain: Putative F-box/kelch-repeat protein At2g29820 (388 aa).

Residues glutamate 6–glutamate 33 are disordered. The span at aspartate 9–glutamine 21 shows a compositional bias: low complexity. Residues glutamate 22–glutamate 33 are compositionally biased toward acidic residues. The F-box domain maps to leucine 38–arginine 84. Kelch repeat units lie at residues lysine 140–glycine 187 and isoleucine 189–tyrosine 233.

The protein is Putative F-box/kelch-repeat protein At2g29820 of Arabidopsis thaliana (Mouse-ear cress).